We begin with the raw amino-acid sequence, 724 residues long: Acyl-coenzyme A oxidase 2 (724 aa).

The segment at 1-48 is disordered; it reads MAMLSQPNDGHDHPEKKDPDTTPKQVAGVISSQDPPHPAKDVAEERAR. Composition is skewed to basic and acidic residues over residues 9-21 and 37-48; these read DGHD…DPDT and HPAKDVAEERAR.

The protein belongs to the acyl-CoA oxidase family. It depends on FAD as a cofactor.

It is found in the peroxisome. It catalyses the reaction a 2,3-saturated acyl-CoA + O2 = a (2E)-enoyl-CoA + H2O2. It functions in the pathway lipid metabolism; peroxisomal fatty acid beta-oxidation. The chain is Acyl-coenzyme A oxidase 2 (POX2) from Candida tropicalis (Yeast).